A 270-amino-acid polypeptide reads, in one-letter code: Phosphatidylglycerol--prolipoprotein diacylglyceryl transferase (270 aa).

The next 4 membrane-spanning stretches (helical) occupy residues 19 to 39 (FPVYWYGIIIGTGVLLGLWLA), 56 to 76 (LVLIAVPIAILFARMYYVIFE), 92 to 112 (QGGLAIHGGLIGAVITGILFA), and 116 to 136 (GVSFWKLADIAAPSILLGQAI). Arg138 lines the a 1,2-diacyl-sn-glycero-3-phospho-(1'-sn-glycerol) pocket. 3 helical membrane passes run 178-198 (HPTFLYESLWNFAGVILLLAL), 206-226 (GELFFTYLIWYSVGRFFVEGL), and 236-256 (LRIAQVMSIGLVVISIIFIIV).

This sequence belongs to the Lgt family.

The protein localises to the cell membrane. It catalyses the reaction L-cysteinyl-[prolipoprotein] + a 1,2-diacyl-sn-glycero-3-phospho-(1'-sn-glycerol) = an S-1,2-diacyl-sn-glyceryl-L-cysteinyl-[prolipoprotein] + sn-glycerol 1-phosphate + H(+). It participates in protein modification; lipoprotein biosynthesis (diacylglyceryl transfer). In terms of biological role, catalyzes the transfer of the diacylglyceryl group from phosphatidylglycerol to the sulfhydryl group of the N-terminal cysteine of a prolipoprotein, the first step in the formation of mature lipoproteins. This chain is Phosphatidylglycerol--prolipoprotein diacylglyceryl transferase, found in Bacillus cereus (strain Q1).